Reading from the N-terminus, the 312-residue chain is Zinc transporter ZitB (312 aa).

6 consecutive transmembrane segments (helical) span residues 16-36 (LLIAFAITTLFMVTEAIGGWL), 40-60 (LALLADTGHMLTDSAALFIAL), 81-101 (LTTLAAFVNAAALLLIVILIV), 117-137 (TPMLIIAIAGLLANIFCFWIL), 153-173 (LHVLSDLLGSVGAMIAAIVIL), and 177-197 (WTPIDPILSVLVSVLILRNAW).

This sequence belongs to the cation diffusion facilitator (CDF) transporter (TC 2.A.4) family. SLC30A subfamily.

Its subcellular location is the cell inner membrane. Functionally, involved in zinc efflux across the cytoplasmic membrane, thus reducing zinc accumulation in the cytoplasm and rendering bacteria more resistant to zinc. It may contribute to zinc homeostasis at low concentrations of zinc. The chain is Zinc transporter ZitB from Yersinia pseudotuberculosis serotype I (strain IP32953).